A 197-amino-acid chain; its full sequence is Imidazoleglycerol-phosphate dehydratase (197 aa).

It belongs to the imidazoleglycerol-phosphate dehydratase family.

It localises to the cytoplasm. It carries out the reaction D-erythro-1-(imidazol-4-yl)glycerol 3-phosphate = 3-(imidazol-4-yl)-2-oxopropyl phosphate + H2O. The protein operates within amino-acid biosynthesis; L-histidine biosynthesis; L-histidine from 5-phospho-alpha-D-ribose 1-diphosphate: step 6/9. In Pseudomonas syringae pv. syringae (strain B728a), this protein is Imidazoleglycerol-phosphate dehydratase.